An 87-amino-acid polypeptide reads, in one-letter code: U3-theraphotoxin-Hhn1a 8 (87 aa).

The signal sequence occupies residues 1–24 (MVNMKASMFLTFAGLVLLFVVCYA). The propeptide occupies 25-52 (SGSEEKEFPKEMLSSIFAVDNDFKQEER). Intrachain disulfides connect C54-C67, C61-C72, and C66-C79.

This sequence belongs to the neurotoxin 10 (Hwtx-1) family. 51 (Hntx-8) subfamily. Hntx-8 sub-subfamily. In terms of tissue distribution, expressed by the venom gland.

The protein localises to the secreted. Its function is as follows. Ion channel inhibitor. The protein is U3-theraphotoxin-Hhn1a 8 of Cyriopagopus hainanus (Chinese bird spider).